Consider the following 462-residue polypeptide: Cysteine--tRNA ligase (462 aa).

Cys29 lines the Zn(2+) pocket. A 'HIGH' region motif is present at residues 31–41; that stretch reads PTVYNHAHIGN. 3 residues coordinate Zn(2+): Cys211, His236, and Glu240. The 'KMSKS' region motif lies at 269 to 273; the sequence is KMSKS. Residue Lys272 coordinates ATP.

The protein belongs to the class-I aminoacyl-tRNA synthetase family. As to quaternary structure, monomer. The cofactor is Zn(2+).

The protein localises to the cytoplasm. The enzyme catalyses tRNA(Cys) + L-cysteine + ATP = L-cysteinyl-tRNA(Cys) + AMP + diphosphate. This Caulobacter sp. (strain K31) protein is Cysteine--tRNA ligase.